The sequence spans 289 residues: Acetylglutamate kinase (289 aa).

Substrate contacts are provided by residues 60–61, Arg82, and Asn182; that span reads GG.

It belongs to the acetylglutamate kinase family. ArgB subfamily.

It localises to the cytoplasm. The enzyme catalyses N-acetyl-L-glutamate + ATP = N-acetyl-L-glutamyl 5-phosphate + ADP. It participates in amino-acid biosynthesis; L-arginine biosynthesis; N(2)-acetyl-L-ornithine from L-glutamate: step 2/4. Functionally, catalyzes the ATP-dependent phosphorylation of N-acetyl-L-glutamate. The sequence is that of Acetylglutamate kinase from Methanothrix thermoacetophila (strain DSM 6194 / JCM 14653 / NBRC 101360 / PT) (Methanosaeta thermophila).